We begin with the raw amino-acid sequence, 223 residues long: Ubiquitin carboxyl-terminal hydrolase isozyme L1 (223 aa).

At methionine 1 the chain carries N-acetylmethionine. The UCH catalytic domain occupies glutamine 2–lysine 221. Residues proline 5–proline 10 are interaction with ubiquitin. Residue cysteine 90 is the Nucleophile of the active site. Serine 125 is subject to Phosphoserine. Histidine 161 serves as the catalytic Proton donor. The tract at residues glutamate 211–alanine 216 is interaction with ubiquitin. Residue cysteine 220 is the site of S-farnesyl cysteine attachment. Positions lysine 221 to alanine 223 are cleaved as a propeptide — removed in mature form.

Belongs to the peptidase C12 family. Monomer. Homodimer. Interacts with COPS5 and SNCA. In terms of processing, O-glycosylated.

The protein resides in the cytoplasm. The protein localises to the endoplasmic reticulum membrane. The enzyme catalyses Thiol-dependent hydrolysis of ester, thioester, amide, peptide and isopeptide bonds formed by the C-terminal Gly of ubiquitin (a 76-residue protein attached to proteins as an intracellular targeting signal).. Its function is as follows. Ubiquitin-protein hydrolase involved both in the processing of ubiquitin precursors and of ubiquitinated proteins. This enzyme is a thiol protease that recognizes and hydrolyzes a peptide bond at the C-terminal glycine of ubiquitin. Also binds to free monoubiquitin and may prevent its degradation in lysosomes. The homodimer may have ATP-independent ubiquitin ligase activity. The chain is Ubiquitin carboxyl-terminal hydrolase isozyme L1 (UCHL1) from Sus scrofa (Pig).